Reading from the N-terminus, the 95-residue chain is Large ribosomal subunit protein bL27 (95 aa).

A propeptide spanning residues 1-10 is cleaved from the precursor; it reads MLLTMNLQLF. The interval 12 to 38 is disordered; that stretch reads HKKGGGSTSNGRDSESKRLGAKSADGQ.

This sequence belongs to the bacterial ribosomal protein bL27 family. The N-terminus is cleaved by ribosomal processing cysteine protease Prp.

The protein is Large ribosomal subunit protein bL27 of Enterococcus faecalis (strain ATCC 700802 / V583).